The sequence spans 342 residues: MRSTKVIHIVGCHAEGEVGDVIVGGVAPPPGETVWEQSRFIANDETLRNFVLNEPRGGVFRHVNLLVPPKDPRAQMGFIIMEPADTPPMSGSNSICVSTVLLDSGIIAMQEPVTHMVLEAPGGIIEVEAECRNGKAERISVRNVPSFADRLDAPLDVTGLGTIMVDTAYGGDSFVIVDAAQIGMKIEPGQARELAEIGVKITKAANEQLGFRHPERDWRHISFCQITEPVTREGDVLTGVNTVAIRPAKLDRSPTGTGCSARMAVLHAKGQMKAGERFIGKSVLGTEFHCRLDKVLELGGKPAISPIISGRAWVTGTSQLMLDPSDPFPHGYRLSDTWPRDE.

The active-site Proton acceptor is Ser-90. Substrate is bound by residues Gly-91–Ser-92, Asp-251, and Gly-256–Thr-257.

Belongs to the proline racemase family.

It catalyses the reaction trans-3-hydroxy-L-proline = 1-pyrroline-2-carboxylate + H2O. Catalyzes the dehydration of trans-3-hydroxy-L-proline (t3LHyp) to Delta(1)-pyrroline-2-carboxylate (Pyr2C). Displays neither proline racemase activity nor 4-hydroxyproline 2-epimerase activity. The sequence is that of Trans-3-hydroxy-L-proline dehydratase from Brucella suis biovar 1 (strain 1330).